The chain runs to 362 residues: Phosphoserine aminotransferase (362 aa).

Arg43 contributes to the L-glutamate binding site. Pyridoxal 5'-phosphate-binding positions include 77 to 78, Trp103, Thr153, Asp173, and Gln196; that span reads AR. Residue Lys197 is modified to N6-(pyridoxal phosphate)lysine.

Belongs to the class-V pyridoxal-phosphate-dependent aminotransferase family. SerC subfamily. As to quaternary structure, homodimer. Pyridoxal 5'-phosphate is required as a cofactor.

Its subcellular location is the cytoplasm. It carries out the reaction O-phospho-L-serine + 2-oxoglutarate = 3-phosphooxypyruvate + L-glutamate. The catalysed reaction is 4-(phosphooxy)-L-threonine + 2-oxoglutarate = (R)-3-hydroxy-2-oxo-4-phosphooxybutanoate + L-glutamate. It functions in the pathway amino-acid biosynthesis; L-serine biosynthesis; L-serine from 3-phospho-D-glycerate: step 2/3. Its pathway is cofactor biosynthesis; pyridoxine 5'-phosphate biosynthesis; pyridoxine 5'-phosphate from D-erythrose 4-phosphate: step 3/5. Catalyzes the reversible conversion of 3-phosphohydroxypyruvate to phosphoserine and of 3-hydroxy-2-oxo-4-phosphonooxybutanoate to phosphohydroxythreonine. This chain is Phosphoserine aminotransferase, found in Legionella pneumophila (strain Paris).